The primary structure comprises 125 residues: Large-conductance mechanosensitive channel (125 aa).

The next 2 membrane-spanning stretches (helical) occupy residues 15–35 (MDLAVGVIIGAAFTAIVNSLV) and 67–87 (GSFLNAVINFLIIALVVFFLI).

It belongs to the MscL family. In terms of assembly, homopentamer.

The protein resides in the cell membrane. Its function is as follows. Channel that opens in response to stretch forces in the membrane lipid bilayer. May participate in the regulation of osmotic pressure changes within the cell. The protein is Large-conductance mechanosensitive channel of Lactobacillus gasseri (strain ATCC 33323 / DSM 20243 / BCRC 14619 / CIP 102991 / JCM 1131 / KCTC 3163 / NCIMB 11718 / NCTC 13722 / AM63).